We begin with the raw amino-acid sequence, 653 residues long: Fructose-1,6-bisphosphatase class 3 (653 aa).

The protein belongs to the FBPase class 3 family. It depends on Mn(2+) as a cofactor.

It carries out the reaction beta-D-fructose 1,6-bisphosphate + H2O = beta-D-fructose 6-phosphate + phosphate. The protein operates within carbohydrate biosynthesis; gluconeogenesis. This chain is Fructose-1,6-bisphosphatase class 3, found in Listeria monocytogenes serotype 4b (strain CLIP80459).